A 196-amino-acid chain; its full sequence is Anthranilate synthase component 2 (196 aa).

One can recognise a Glutamine amidotransferase type-1 domain in the interval 3–196 (NIVFIDNFDS…IEWALEKNNA (194 aa)). 57–59 (GPG) provides a ligand contact to L-glutamine. The active-site Nucleophile; for GATase activity is Cys-84. Residues Gln-88 and 134–135 (SL) contribute to the L-glutamine site. Residues His-170 and Glu-172 each act as for GATase activity in the active site.

As to quaternary structure, heterotetramer consisting of two non-identical subunits: a beta subunit (TrpG) and a large alpha subunit (TrpE).

The catalysed reaction is chorismate + L-glutamine = anthranilate + pyruvate + L-glutamate + H(+). Its pathway is amino-acid biosynthesis; L-tryptophan biosynthesis; L-tryptophan from chorismate: step 1/5. Its function is as follows. Part of a heterotetrameric complex that catalyzes the two-step biosynthesis of anthranilate, an intermediate in the biosynthesis of L-tryptophan. In the first step, the glutamine-binding beta subunit (TrpG) of anthranilate synthase (AS) provides the glutamine amidotransferase activity which generates ammonia as a substrate that, along with chorismate, is used in the second step, catalyzed by the large alpha subunit of AS (TrpE) to produce anthranilate. In the absence of TrpG, TrpE can synthesize anthranilate directly from chorismate and high concentrations of ammonia. This chain is Anthranilate synthase component 2 (trpG), found in Vibrio parahaemolyticus serotype O3:K6 (strain RIMD 2210633).